The primary structure comprises 400 residues: Phosphoglycerate kinase (400 aa).

Substrate-binding positions include 22–24, Arg-38, 61–64, Arg-119, and Arg-152; these read DFN and HLGR. ATP contacts are provided by residues Lys-205, Gly-296, Glu-327, and 353–356; that span reads GGDT.

It belongs to the phosphoglycerate kinase family. As to quaternary structure, monomer.

Its subcellular location is the cytoplasm. It carries out the reaction (2R)-3-phosphoglycerate + ATP = (2R)-3-phospho-glyceroyl phosphate + ADP. It participates in carbohydrate degradation; glycolysis; pyruvate from D-glyceraldehyde 3-phosphate: step 2/5. The protein is Phosphoglycerate kinase of Campylobacter jejuni subsp. doylei (strain ATCC BAA-1458 / RM4099 / 269.97).